Here is a 273-residue protein sequence, read N- to C-terminus: 2,3,4,5-tetrahydropyridine-2,6-dicarboxylate N-succinyltransferase (273 aa).

Substrate-binding residues include Arg104 and Asp141.

This sequence belongs to the transferase hexapeptide repeat family. In terms of assembly, homotrimer.

It is found in the cytoplasm. The enzyme catalyses (S)-2,3,4,5-tetrahydrodipicolinate + succinyl-CoA + H2O = (S)-2-succinylamino-6-oxoheptanedioate + CoA. The protein operates within amino-acid biosynthesis; L-lysine biosynthesis via DAP pathway; LL-2,6-diaminopimelate from (S)-tetrahydrodipicolinate (succinylase route): step 1/3. In Psychrobacter sp. (strain PRwf-1), this protein is 2,3,4,5-tetrahydropyridine-2,6-dicarboxylate N-succinyltransferase.